A 215-amino-acid chain; its full sequence is Protein-L-isoaspartate O-methyltransferase (215 aa).

The active site involves Ser-62.

It belongs to the methyltransferase superfamily. L-isoaspartyl/D-aspartyl protein methyltransferase family.

Its subcellular location is the cytoplasm. It catalyses the reaction [protein]-L-isoaspartate + S-adenosyl-L-methionine = [protein]-L-isoaspartate alpha-methyl ester + S-adenosyl-L-homocysteine. Its function is as follows. Catalyzes the methyl esterification of L-isoaspartyl residues in peptides and proteins that result from spontaneous decomposition of normal L-aspartyl and L-asparaginyl residues. It plays a role in the repair and/or degradation of damaged proteins. The protein is Protein-L-isoaspartate O-methyltransferase of Bradyrhizobium sp. (strain BTAi1 / ATCC BAA-1182).